A 103-amino-acid polypeptide reads, in one-letter code: Large ribosomal subunit protein bL21 (103 aa).

Belongs to the bacterial ribosomal protein bL21 family. As to quaternary structure, part of the 50S ribosomal subunit. Contacts protein L20.

This protein binds to 23S rRNA in the presence of protein L20. This is Large ribosomal subunit protein bL21 from Shewanella baltica (strain OS223).